The primary structure comprises 159 residues: 6,7-dimethyl-8-ribityllumazine synthase (159 aa).

Residues Phe22, 57-59 (TYE), and 81-83 (TII) each bind 5-amino-6-(D-ribitylamino)uracil. 86–87 (ST) serves as a coordination point for (2S)-2-hydroxy-3-oxobutyl phosphate. The Proton donor role is filled by His89. Met114 provides a ligand contact to 5-amino-6-(D-ribitylamino)uracil. (2S)-2-hydroxy-3-oxobutyl phosphate is bound at residue Arg128.

The protein belongs to the DMRL synthase family. As to quaternary structure, forms an icosahedral capsid composed of 60 subunits, arranged as a dodecamer of pentamers.

It carries out the reaction (2S)-2-hydroxy-3-oxobutyl phosphate + 5-amino-6-(D-ribitylamino)uracil = 6,7-dimethyl-8-(1-D-ribityl)lumazine + phosphate + 2 H2O + H(+). It participates in cofactor biosynthesis; riboflavin biosynthesis; riboflavin from 2-hydroxy-3-oxobutyl phosphate and 5-amino-6-(D-ribitylamino)uracil: step 1/2. Its function is as follows. Catalyzes the formation of 6,7-dimethyl-8-ribityllumazine by condensation of 5-amino-6-(D-ribitylamino)uracil with 3,4-dihydroxy-2-butanone 4-phosphate. This is the penultimate step in the biosynthesis of riboflavin. The sequence is that of 6,7-dimethyl-8-ribityllumazine synthase from Buchnera aphidicola subsp. Schizaphis graminum (strain Sg).